We begin with the raw amino-acid sequence, 248 residues long: Ribosomal RNA small subunit methyltransferase G (248 aa).

Residues G85, F90, 108-110 (DSS), 137-138 (AE), and R156 each bind S-adenosyl-L-methionine.

This sequence belongs to the methyltransferase superfamily. RNA methyltransferase RsmG family.

The protein resides in the cytoplasm. Its function is as follows. Specifically methylates the N7 position of a guanine in 16S rRNA. This chain is Ribosomal RNA small subunit methyltransferase G, found in Prochlorococcus marinus (strain NATL2A).